The following is a 297-amino-acid chain: UDP-N-acetylenolpyruvoylglucosamine reductase (297 aa).

The 167-residue stretch at 18-184 (QVGGPAEWYL…LSARLRLAPG (167 aa)) folds into the FAD-binding PCMH-type domain. Residue Arg163 is part of the active site. Ser214 serves as the catalytic Proton donor. Glu285 is an active-site residue.

It depends on FAD as a cofactor.

The protein resides in the cytoplasm. The catalysed reaction is UDP-N-acetyl-alpha-D-muramate + NADP(+) = UDP-N-acetyl-3-O-(1-carboxyvinyl)-alpha-D-glucosamine + NADPH + H(+). It participates in cell wall biogenesis; peptidoglycan biosynthesis. Its function is as follows. Cell wall formation. In Gloeobacter violaceus (strain ATCC 29082 / PCC 7421), this protein is UDP-N-acetylenolpyruvoylglucosamine reductase.